The sequence spans 259 residues: Thiazole synthase (259 aa).

Residue Lys99 is the Schiff-base intermediate with DXP of the active site. 1-deoxy-D-xylulose 5-phosphate contacts are provided by residues Gly161, 187–188 (AG), and 209–210 (NT).

Belongs to the ThiG family. As to quaternary structure, homotetramer. Forms heterodimers with either ThiH or ThiS.

It is found in the cytoplasm. It carries out the reaction [ThiS sulfur-carrier protein]-C-terminal-Gly-aminoethanethioate + 2-iminoacetate + 1-deoxy-D-xylulose 5-phosphate = [ThiS sulfur-carrier protein]-C-terminal Gly-Gly + 2-[(2R,5Z)-2-carboxy-4-methylthiazol-5(2H)-ylidene]ethyl phosphate + 2 H2O + H(+). The protein operates within cofactor biosynthesis; thiamine diphosphate biosynthesis. Catalyzes the rearrangement of 1-deoxy-D-xylulose 5-phosphate (DXP) to produce the thiazole phosphate moiety of thiamine. Sulfur is provided by the thiocarboxylate moiety of the carrier protein ThiS. In vitro, sulfur can be provided by H(2)S. This Sulfurimonas denitrificans (strain ATCC 33889 / DSM 1251) (Thiomicrospira denitrificans (strain ATCC 33889 / DSM 1251)) protein is Thiazole synthase.